A 486-amino-acid polypeptide reads, in one-letter code: UDP-GalNAc:beta-1,3-N-acetylgalactosaminyltransferase 2 (486 aa).

Topologically, residues 1 to 10 (MRHLLFLCPC) are cytoplasmic. The chain crosses the membrane as a helical; Signal-anchor for type II membrane protein span at residues 11 to 31 (VIGVAFHLWLFNFSGLFSWFL). Over 32–486 (VWSPHSYDIV…CGNPCACEDR (455 aa)) the chain is Lumenal. N103 and N160 each carry an N-linked (GlcNAc...) asparagine glycan.

This sequence belongs to the glycosyltransferase 31 family.

It is found in the golgi apparatus membrane. It localises to the endoplasmic reticulum. It carries out the reaction 3-O-(N-acetyl-beta-D-glucosaminyl-(1-&gt;4)-alpha-D-mannosyl)-L-threonyl-[protein] + UDP-N-acetyl-alpha-D-galactosamine = 3-O-[beta-D-GalNAc-(1-&gt;3)-beta-D-GlcNAc-(1-&gt;4)-alpha-D-Man]-L-Thr-[protein] + UDP + H(+). It participates in protein modification; protein glycosylation. Its function is as follows. Beta-1,3-N-acetylgalactosaminyltransferase that synthesizes a unique carbohydrate structure, GalNAc-beta-1-3GlcNAc, on N- and O-glycans. Has no galactose nor galactosaminyl transferase activity toward any acceptor substrate. Involved in alpha-dystroglycan (dag1) glycosylation. This chain is UDP-GalNAc:beta-1,3-N-acetylgalactosaminyltransferase 2 (b3galnt2), found in Xenopus laevis (African clawed frog).